A 108-amino-acid polypeptide reads, in one-letter code: UPF0145 protein Ava_0420 (108 aa).

This sequence belongs to the UPF0145 family.

In Trichormus variabilis (strain ATCC 29413 / PCC 7937) (Anabaena variabilis), this protein is UPF0145 protein Ava_0420.